The sequence spans 486 residues: ATP synthase subunit beta (486 aa).

164 to 171 (GGAGVGKT) contacts ATP.

The protein belongs to the ATPase alpha/beta chains family. As to quaternary structure, F-type ATPases have 2 components, CF(1) - the catalytic core - and CF(0) - the membrane proton channel. CF(1) has five subunits: alpha(3), beta(3), gamma(1), delta(1), epsilon(1). CF(0) has four main subunits: a(1), b(1), b'(1) and c(9-12).

Its subcellular location is the cellular thylakoid membrane. It carries out the reaction ATP + H2O + 4 H(+)(in) = ADP + phosphate + 5 H(+)(out). In terms of biological role, produces ATP from ADP in the presence of a proton gradient across the membrane. The catalytic sites are hosted primarily by the beta subunits. The polypeptide is ATP synthase subunit beta (Prochlorococcus marinus (strain MIT 9515)).